The sequence spans 446 residues: UDP-N-acetylmuramate--L-alanine ligase (446 aa).

122–128 (GTHGKTT) is an ATP binding site.

Belongs to the MurCDEF family.

Its subcellular location is the cytoplasm. It catalyses the reaction UDP-N-acetyl-alpha-D-muramate + L-alanine + ATP = UDP-N-acetyl-alpha-D-muramoyl-L-alanine + ADP + phosphate + H(+). It functions in the pathway cell wall biogenesis; peptidoglycan biosynthesis. Cell wall formation. The polypeptide is UDP-N-acetylmuramate--L-alanine ligase (Nocardioides sp. (strain ATCC BAA-499 / JS614)).